Here is a 737-residue protein sequence, read N- to C-terminus: ATP-dependent RNA helicase SUV3, mitochondrial (737 aa).

The transit peptide at 1-25 (MALVKYSTVFFPLRSLRLFVSIKKA) directs the protein to the mitochondrion. In terms of domain architecture, Helicase ATP-binding spans 226-365 (EARKIRRHII…KSVLPLVKSI (140 aa)). 239-246 (GPTNSGKT) is a binding site for ATP. One can recognise a Helicase C-terminal domain in the interval 390 to 546 (PIKDGIKGLR…YLKTAVTWPT (157 aa)).

The protein belongs to the helicase family. In terms of assembly, MSU1 and SUV3 are the two components of the mitochondrial degradosome (mtEXO).

The protein resides in the mitochondrion matrix. It carries out the reaction ATP + H2O = ADP + phosphate + H(+). Functionally, required for intron-independent turnover and processing of mitochondrial RNA. It is a key control element in nuclear-mitochondrial interactions. The chain is ATP-dependent RNA helicase SUV3, mitochondrial (SUV3) from Saccharomyces cerevisiae (strain ATCC 204508 / S288c) (Baker's yeast).